The following is a 66-amino-acid chain: Small ribosomal subunit protein eS27 (66 aa).

4 residues coordinate Zn(2+): Cys-21, Cys-24, Cys-40, and Cys-43. Residues 21-43 (CRQCNNEQVIFSNATFPVRCLSC) form a C4-type zinc finger.

This sequence belongs to the eukaryotic ribosomal protein eS27 family. Part of the 30S ribosomal subunit. The cofactor is Zn(2+).

The protein is Small ribosomal subunit protein eS27 of Sulfolobus acidocaldarius (strain ATCC 33909 / DSM 639 / JCM 8929 / NBRC 15157 / NCIMB 11770).